A 186-amino-acid chain; its full sequence is Ribosome-recycling factor (186 aa).

The protein belongs to the RRF family.

The protein resides in the cytoplasm. In terms of biological role, responsible for the release of ribosomes from messenger RNA at the termination of protein biosynthesis. May increase the efficiency of translation by recycling ribosomes from one round of translation to another. The sequence is that of Ribosome-recycling factor from Herminiimonas arsenicoxydans.